Here is a 209-residue protein sequence, read N- to C-terminus: Thiamine-phosphate synthase (209 aa).

Residues 38-42 (QYRDK) and Asn-70 contribute to the 4-amino-2-methyl-5-(diphosphooxymethyl)pyrimidine site. Asp-71 and Asp-89 together coordinate Mg(2+). Thr-108 contacts 4-amino-2-methyl-5-(diphosphooxymethyl)pyrimidine. A 2-[(2R,5Z)-2-carboxy-4-methylthiazol-5(2H)-ylidene]ethyl phosphate-binding site is contributed by 135–137 (SNT). Lys-138 contacts 4-amino-2-methyl-5-(diphosphooxymethyl)pyrimidine. Gly-165 is a binding site for 2-[(2R,5Z)-2-carboxy-4-methylthiazol-5(2H)-ylidene]ethyl phosphate.

This sequence belongs to the thiamine-phosphate synthase family. Requires Mg(2+) as cofactor.

The catalysed reaction is 2-[(2R,5Z)-2-carboxy-4-methylthiazol-5(2H)-ylidene]ethyl phosphate + 4-amino-2-methyl-5-(diphosphooxymethyl)pyrimidine + 2 H(+) = thiamine phosphate + CO2 + diphosphate. It catalyses the reaction 2-(2-carboxy-4-methylthiazol-5-yl)ethyl phosphate + 4-amino-2-methyl-5-(diphosphooxymethyl)pyrimidine + 2 H(+) = thiamine phosphate + CO2 + diphosphate. The enzyme catalyses 4-methyl-5-(2-phosphooxyethyl)-thiazole + 4-amino-2-methyl-5-(diphosphooxymethyl)pyrimidine + H(+) = thiamine phosphate + diphosphate. The protein operates within cofactor biosynthesis; thiamine diphosphate biosynthesis; thiamine phosphate from 4-amino-2-methyl-5-diphosphomethylpyrimidine and 4-methyl-5-(2-phosphoethyl)-thiazole: step 1/1. Functionally, condenses 4-methyl-5-(beta-hydroxyethyl)thiazole monophosphate (THZ-P) and 2-methyl-4-amino-5-hydroxymethyl pyrimidine pyrophosphate (HMP-PP) to form thiamine monophosphate (TMP). The chain is Thiamine-phosphate synthase from Ectopseudomonas mendocina (strain ymp) (Pseudomonas mendocina).